The primary structure comprises 112 residues: uncharacterized protein (112 aa).

The next 2 membrane-spanning stretches (helical) occupy residues 44–63 and 68–90; these read VITG…LHSL and LAAL…KLVH.

The protein localises to the cell membrane. This is an uncharacterized protein from Archaeoglobus fulgidus (strain ATCC 49558 / DSM 4304 / JCM 9628 / NBRC 100126 / VC-16).